Consider the following 637-residue polypeptide: 1-deoxy-D-xylulose-5-phosphate synthase (637 aa).

Thiamine diphosphate-binding positions include His-76 and 117–119 (GHS). Residue Asp-148 coordinates Mg(2+). Thiamine diphosphate is bound by residues 149–150 (GA), Asn-177, Tyr-294, and Glu-381. Asn-177 is a binding site for Mg(2+).

The protein belongs to the transketolase family. DXPS subfamily. Homodimer. It depends on Mg(2+) as a cofactor. The cofactor is thiamine diphosphate.

The catalysed reaction is D-glyceraldehyde 3-phosphate + pyruvate + H(+) = 1-deoxy-D-xylulose 5-phosphate + CO2. The protein operates within metabolic intermediate biosynthesis; 1-deoxy-D-xylulose 5-phosphate biosynthesis; 1-deoxy-D-xylulose 5-phosphate from D-glyceraldehyde 3-phosphate and pyruvate: step 1/1. In terms of biological role, catalyzes the acyloin condensation reaction between C atoms 2 and 3 of pyruvate and glyceraldehyde 3-phosphate to yield 1-deoxy-D-xylulose-5-phosphate (DXP). This is 1-deoxy-D-xylulose-5-phosphate synthase from Neisseria meningitidis serogroup A / serotype 4A (strain DSM 15465 / Z2491).